A 266-amino-acid chain; its full sequence is Phosphate import ATP-binding protein PstB (266 aa).

Positions 15–261 constitute an ABC transporter domain; sequence VQKSVVNKLN…PKNKQTEDYI (247 aa). An ATP-binding site is contributed by 50 to 57; sequence GPSGCGKS.

Belongs to the ABC transporter superfamily. Phosphate importer (TC 3.A.1.7) family. As to quaternary structure, the complex is composed of two ATP-binding proteins (PstB), two transmembrane proteins (PstC and PstA) and a solute-binding protein (PstS).

It localises to the cell inner membrane. It catalyses the reaction phosphate(out) + ATP + H2O = ADP + 2 phosphate(in) + H(+). In terms of biological role, part of the ABC transporter complex PstSACB involved in phosphate import. Responsible for energy coupling to the transport system. The sequence is that of Phosphate import ATP-binding protein PstB from Nitrosomonas europaea (strain ATCC 19718 / CIP 103999 / KCTC 2705 / NBRC 14298).